Here is a 153-residue protein sequence, read N- to C-terminus: MSVLKEFKEFAVKGNVIDLAVGVVIGGAFGSIVKSLVDDVIMPPIGLLIGNVDFSNLFFVLKDGAKQAGPYVSVAAAKQAGATTLNLGLFINALVSFTIVAFAIFMLVKAINRLKREEAAPAPAAPATKECRYCLSAIPEKATRCPCCTSQLD.

2 helical membrane-spanning segments follow: residues 16–36 (VIDL…VKSL) and 88–108 (GLFI…FMLV).

The protein belongs to the MscL family. As to quaternary structure, homopentamer.

The protein localises to the cell inner membrane. Channel that opens in response to stretch forces in the membrane lipid bilayer. May participate in the regulation of osmotic pressure changes within the cell. The chain is Large-conductance mechanosensitive channel from Chromobacterium violaceum (strain ATCC 12472 / DSM 30191 / JCM 1249 / CCUG 213 / NBRC 12614 / NCIMB 9131 / NCTC 9757 / MK).